We begin with the raw amino-acid sequence, 400 residues long: Inosine-5'-monophosphate dehydrogenase (400 aa).

Basic and acidic residues predominate over residues 96-116 (KNESTPDQNLDKESTDGKDTK). Positions 96–125 (KNESTPDQNLDKESTDGKDTKSNNNIDAYS) are disordered. Residues aspartate 163 and 212–214 (GIG) contribute to the NAD(+) site. K(+) contacts are provided by glycine 214 and glycine 216. Serine 217 provides a ligand contact to IMP. Cysteine 219 lines the K(+) pocket. Cysteine 219 (thioimidate intermediate) is an active-site residue. Residues 252–254 (DGG), 275–276 (GS), and 299–303 (YRGMG) contribute to the IMP site. The active-site Proton acceptor is arginine 315. Glutamate 329 contacts IMP. The K(+) site is built by glutamate 383, serine 384, and histidine 385.

It belongs to the IMPDH/GMPR family. As to quaternary structure, homotetramer. K(+) serves as cofactor.

It localises to the cytoplasm. The enzyme catalyses IMP + NAD(+) + H2O = XMP + NADH + H(+). Its pathway is purine metabolism; XMP biosynthesis via de novo pathway; XMP from IMP: step 1/1. Its activity is regulated as follows. Mycophenolic acid (MPA) is a non-competitive inhibitor that prevents formation of the closed enzyme conformation by binding to the same site as the amobile flap. In contrast, mizoribine monophosphate (MZP) is a competitive inhibitor that induces the closed conformation. MPA is a potent inhibitor of mammalian IMPDHs but a poor inhibitor of the bacterial enzymes. MZP is a more potent inhibitor of bacterial IMPDH. Resistant to mycophenolic acid (MPA) inhibition. Its function is as follows. Catalyzes the conversion of inosine 5'-phosphate (IMP) to xanthosine 5'-phosphate (XMP), the first committed and rate-limiting step in the de novo synthesis of guanine nucleotides, and therefore plays an important role in the regulation of cell growth. This Cryptosporidium parvum protein is Inosine-5'-monophosphate dehydrogenase.